A 410-amino-acid chain; its full sequence is Transposase for insertion sequence element IS801 (410 aa).

The protein belongs to the transposase 32 family.

Involved in the transposition of the insertion sequence. The sequence is that of Transposase for insertion sequence element IS801 from Pseudomonas savastanoi pv. phaseolicola (Pseudomonas syringae pv. phaseolicola).